The chain runs to 218 residues: Ribose-5-phosphate isomerase A (218 aa).

Substrate-binding positions include 28-31 (TGST), 81-84 (DGAD), and 94-97 (KGGG). The Proton acceptor role is filled by Glu103. A substrate-binding site is contributed by Lys121.

This sequence belongs to the ribose 5-phosphate isomerase family. In terms of assembly, homodimer.

The catalysed reaction is aldehydo-D-ribose 5-phosphate = D-ribulose 5-phosphate. It functions in the pathway carbohydrate degradation; pentose phosphate pathway; D-ribose 5-phosphate from D-ribulose 5-phosphate (non-oxidative stage): step 1/1. In terms of biological role, catalyzes the reversible conversion of ribose-5-phosphate to ribulose 5-phosphate. The protein is Ribose-5-phosphate isomerase A of Pseudoalteromonas atlantica (strain T6c / ATCC BAA-1087).